The primary structure comprises 2621 residues: MSCENEAPLTRSFCRTKRRDRFSHEEAARKCRIETHDIEDIRACTQEQLVYATLLSQGDEGAIAEWSFDIPESINIDFLKKAWQDMVRSKAFLRTRIIADDSPGIFLCVVMNGEPLLWTEGDGMDDPWVLGSSLARFRLIEVPNTNQRRLVVKIHHAICDPCSLYAVFESVDHAYQKKKLYNLQQNETPTACTTEGSFDDATAFPELPASVQCPSARHSLEQSVSVGTLPPSLGEITANVWLAWAITQSQYQSSDRVLFGTGSRHDEERPGFPAYVSPRLVVLDSQVAVADILQELENMFIGPAQKRTAVRTPSAEKKGMSGAVQTVVSVRRLAQHRPLTCANLVKSEKQNPFQNYALTLDCQLEKDFLIKVQAHYDHNVIPQWVTQRVLSHFMHVLPQTFHRNRDTKLASLKSLSPYDEAQLAYWNSKHVPVAEEPTHHIIHRICMEQPNAEAICSWDGKFTYNEVDVLSDSLATQLTDLGLGGSGSIIPVYMDKGRWVPIAILGVLKSGAAFTLFDPSHPLQRLKIMAEDVKAKAILCSRMTMELASQIVPQTLQIDDERGWDTIRARPGSHFSRSSRQDDALYVAFTSGSTGKPKAIVIEHGSYCTGAKEHIKAFRLSRKARVLQFALYAFDVSIMEILSTLMAGGCICILNEVQRTTPQDFEKALSSFSVTHAFLTPSFARSLRNAQLPSLDVLILGGEPMSPADAGHWASRNVVLMNAYGPAECSVNTTVQPCAAACPGNIGFTTGAACWVVDPMNHNQLVPIGGIGELLVQGPIVGRGYLNNPTLTKASFVKFVPSISAHLPGAEIIDRAYRTGDLVRQQMDGSIVYIGRKDQQVKIRGQRIELSEVEFQVQKSLEGDVDVVIEAVDIEGKSQPLLVAFLNLGIHGAQANEDLAPLAMPCEEWFRRLESMEGALKHYLPPSMIPNLFLPLVYTPTTPTGKIDRRLLRELSSRLSQAQLELYRNRNKDELKRQPYTQVEETLQRLFSQILGVEQRHISVTDSFFQLGGDSISAIRLIGAARDAGLEFTVSELLSAPTISEVALYSRALSVPKEEASPPPPFVLLGTSAKVPEILQLVANQIKLSNLDNIEDIYPCTALQEGMFALSLKSPGTYTGEVLLRLPGDVDMQRLLSAWQATVEANPILRTQIVQTPKGLFQVVMRRVDFECKQHASLDALGKLHVNQDKGVSINPMCQVALVKHNGDQHFALKIHHALCDGWSLKLILGQLDLAYRKEASLTPSYFNTFIKYLDSIAGWEDYWTSEFRDLQAPIYPALPSPSYMPRPTSLRDHAIHNLHMADSGMRLPILIKLAWSILVSNYTDSDDVVIGLTLNGRNAPVPGIEQLIGPTITTVPLRTRIHEDDTVRTASNCLHNKLTAMISYEQAGLQRIGKLNDNCRTACSFQMQVGIQPPADFNTENYCFDVLEHSIGPSMDYSDFSTYGIVVVCELSRSGTALHVKMRHDPDLVSPDEANCMVHLFEHLLRQLCENPDMRLNQLELAGPQDIKQFAKWNATAPVPVERCLHELIMNHSRTQPGASAICGWDGYVTYQELGLLITQLAYYLRTRFHIRPGMNVPICPNRSKWAIVSMLSVLYAGGSCVLLDPNHPQARMQTVISDTAADIIICNAGTEEKVTGLTRHLVIVGPELLESLPTPASLPQCLSDATPMDPAFVIFTSGSTGKPKGIIMSHKSLSTSIYYHSPQLGVNQQTRTLHFCSYAFDASIYEIFTTLVCGGCVCVPSASDCTDNLAGFITHFDVNLAIMAPSVARLLHPDSVPSLQCLVLGGEALTWEIVNLWADRVRLVNGYGPAEATIMAAGVVQASDWITGLIGPVVGANPWITKPFNPDQLVARGMIGELLIEGPVLADGYINAPEKSADPFIPAPTWLRSIRPNSAGATRLYRTGDLVQQQRDGSIRFMGRRDNQVKLRGQRIELQEVEHCVTSHVPDAVVVAEVVSFLTNERRRNELVVFIRDSTAGTEPDNITSNPEETSAIFSSPTKVDHTAMAELKAHMARNLPRYMVPWIILPLDDIPKTASGKTDRARLRVAAGKLEQKTLDQYMNIANIVKRQPSTTQEALVRSIFAQVLSLPESTIGVDDSFFNIGGDSISAMRFLTLCRQANLHLAMPAFLTYNTVALFCTNASTSIDISRFDASEEMDRNTPLVTIDHEKHISTLRTTLCNQLGLDSVLSIEDIYPCSSSHAGIIRGLAGSGDRHQVRAIFKLHGSKVVDPAHVLECWHKLIQRHAILRTVIVNNPLHPGEFLHVVLKQPPIDMASLSFQSPNVVTQLCDIHPSFDWETSPAHQMVIAQGYEGEAYCKLEAGKALIDWSSFSILVDELCLAINHLLPSKPAPLYKDFISYVQRQPLDKIMNYWERTLSGVTSSIIPRSLPEAPADPDAVPVLHSTRITLDGFKDIDAFWRGNRLTLTNIFQVAWGLVLSFHSRLPEVCFGTVVSGRDIPVTNIEDMVGPCFNILPCRLDLSPDRNIMETLQQNQQDMQRRTDHQHCSISEITRGVRQTTSTPLFNTCLSVQVSLSSQMEEPSGDLGHDIQVSMVDIHDPTEYDICLAVLIYRTQIEIDLRYWSFAFSEQDATRLLNNLRQAISHIVAHSARPIASIDWEA.

Residues cysteine 446–arginine 844 form an adenylation 1 region. One can recognise a Carrier 1 domain in the interval glutamine 978–serine 1054. O-(pantetheine 4'-phosphoryl)serine is present on serine 1015. The condensation 1 stretch occupies residues glutamate 1095 to glutamine 1506. The adenylation 2 stretch occupies residues serine 1534–arginine 1930. A Carrier 2 domain is found at glutamine 2071–isoleucine 2147. An O-(pantetheine 4'-phosphoryl)serine modification is found at serine 2108. A condensation 2 region spans residues alanine 2220–aspartate 2618.

The protein belongs to the NRP synthetase family.

Its pathway is alkaloid biosynthesis. Functionally, nonribosomal peptide synthetase; part of the gene cluster that mediates the biosynthesis of the dimeric diketopiperazine alkaloid ditryptophenaline. The nonribosomal peptide synthase dtpA accepts L-tryptophan and L-phenylalanine as its substrates and forms the phenylalanyl-tryptophanyl cyclic dipeptide product cyclophenylalanyltryptophenyl. The N-methyltransferase dtpB is responsible for the N-methylation of cyclophenylalanyltryptophenyl to yield cyclo-N-methylphenylalanyltryptophenyl. The cytochrome P450 monooxygenase is responsible not only for pyrroloindole ring formation but also for concurrent dimerization of N-methylphenylalanyltryptophanyl diketopiperazine monomers into a homodimeric product. In Aspergillus flavus (strain ATCC 200026 / FGSC A1120 / IAM 13836 / NRRL 3357 / JCM 12722 / SRRC 167), this protein is Nonribosomal peptide synthetase dtpA.